The sequence spans 127 residues: Putative pre-16S rRNA nuclease (127 aa).

It belongs to the YqgF nuclease family.

Its subcellular location is the cytoplasm. Its function is as follows. Could be a nuclease involved in processing of the 5'-end of pre-16S rRNA. The protein is Putative pre-16S rRNA nuclease of Campylobacter jejuni subsp. jejuni serotype O:6 (strain 81116 / NCTC 11828).